We begin with the raw amino-acid sequence, 636 residues long: MHISDITHPNQLHGLSIRQLEDVARQIREKHLQTIAATGGHLGPGLGVVELTIALYQTLDLDRDKVTWDVGHQAYPHKMLTGRYKNFHTLRQKDGIAGYLKRCESKFDHFGAGHASTSISAALGMALARDAQGEDYKVVAVIGDGALTGGMALEAINHAGHLPHTNLMVVLNDNEMSISPNVGAISRYLNKVRLSDPVQFLADNLEEQFKHLPFFGDSLSPEMERVKEGMKRLAVSKVGAVIEELGFKYFGPIDGHNLQELISTFKQAHKVTGPVLVHVATVKGKGYELAEKDQVGYHAQSPFNLATGKAIPSSKPKPPSYAKVFAHTLTTLAENNPKIIGITAAMATGTGLDKLQAKLPKQYIDVGIAEQHAVTLAGGLACEGMRPVVAIYSTFLQRAYDQVLHDVCIQNLPVFFCMDRAGIVGADGPTHQGMYDIAYLRCIPNMTIMAPKDEAELQRMIVTGVNYTDGPIAMRYPRGNGIGVPLMEEGWEPLPIGKGEILRNGDDLLILGYGTMVNTALQAAETLREHGIEATVVNARFVKPLDTELILPLAQRIGKVVTLEEGCLMGGFGSAVAEAFSDHNVLVPLKRFGVPDRLVDHATPDQSKADLGLTSPQIAEQILQVFFSNRQPSMVS.

Residues His72 and 113–115 (GHA) contribute to the thiamine diphosphate site. Asp144 is a binding site for Mg(2+). Thiamine diphosphate is bound by residues 145–146 (GA), Asn174, Tyr287, and Glu370. A Mg(2+)-binding site is contributed by Asn174.

This sequence belongs to the transketolase family. DXPS subfamily. In terms of assembly, homodimer. Requires Mg(2+) as cofactor. Thiamine diphosphate serves as cofactor.

It catalyses the reaction D-glyceraldehyde 3-phosphate + pyruvate + H(+) = 1-deoxy-D-xylulose 5-phosphate + CO2. The protein operates within metabolic intermediate biosynthesis; 1-deoxy-D-xylulose 5-phosphate biosynthesis; 1-deoxy-D-xylulose 5-phosphate from D-glyceraldehyde 3-phosphate and pyruvate: step 1/1. Catalyzes the acyloin condensation reaction between C atoms 2 and 3 of pyruvate and glyceraldehyde 3-phosphate to yield 1-deoxy-D-xylulose-5-phosphate (DXP). This Rippkaea orientalis (strain PCC 8801 / RF-1) (Cyanothece sp. (strain PCC 8801)) protein is 1-deoxy-D-xylulose-5-phosphate synthase.